Here is a 283-residue protein sequence, read N- to C-terminus: 4-diphosphocytidyl-2-C-methyl-D-erythritol kinase (283 aa).

Lys12 is an active-site residue. 94–104 (PAQAGLGGGSS) serves as a coordination point for ATP. Asp136 is a catalytic residue.

It belongs to the GHMP kinase family. IspE subfamily.

It carries out the reaction 4-CDP-2-C-methyl-D-erythritol + ATP = 4-CDP-2-C-methyl-D-erythritol 2-phosphate + ADP + H(+). Its pathway is isoprenoid biosynthesis; isopentenyl diphosphate biosynthesis via DXP pathway; isopentenyl diphosphate from 1-deoxy-D-xylulose 5-phosphate: step 3/6. Functionally, catalyzes the phosphorylation of the position 2 hydroxy group of 4-diphosphocytidyl-2C-methyl-D-erythritol. The sequence is that of 4-diphosphocytidyl-2-C-methyl-D-erythritol kinase from Acidovorax ebreus (strain TPSY) (Diaphorobacter sp. (strain TPSY)).